We begin with the raw amino-acid sequence, 1798 residues long: DNA polymerase II large subunit (1798 aa).

Positions 286 to 309 (EKGKSSEENKDESKAEDTGTESVA) are disordered. The 136-residue stretch at 1184-1319 (VVGYYLAEGY…ETLLLAKFGI (136 aa)) folds into the DOD-type homing endonuclease domain. Positions 1699–1798 (TGHSNGKNGY…GISLDEFFGS (100 aa)) are disordered. A compositionally biased stretch (low complexity) spans 1714–1731 (GKNGKASKKSGSLASKLS). The segment covering 1733 to 1753 (KGKEPSKKKESAKPKRSEKVK) has biased composition (basic and acidic residues).

It belongs to the archaeal DNA polymerase II family. As to quaternary structure, heterodimer of a large subunit and a small subunit. Post-translationally, this protein undergoes a protein self splicing that involves a post-translational excision of the intervening region (intein) followed by peptide ligation.

It catalyses the reaction DNA(n) + a 2'-deoxyribonucleoside 5'-triphosphate = DNA(n+1) + diphosphate. It carries out the reaction Exonucleolytic cleavage in the 3'- to 5'-direction to yield nucleoside 5'-phosphates.. In terms of biological role, possesses two activities: a DNA synthesis (polymerase) and an exonucleolytic activity that degrades single-stranded DNA in the 3'- to 5'-direction. Has a template-primer preference which is characteristic of a replicative DNA polymerase. This is DNA polymerase II large subunit (polC) from Thermococcus kodakarensis (strain ATCC BAA-918 / JCM 12380 / KOD1) (Pyrococcus kodakaraensis (strain KOD1)).